The primary structure comprises 142 residues: FAD synthase (142 aa).

ATP is bound by residues 9–10, 14–17, and Asp-92; these read TF and HPGH.

The protein belongs to the archaeal FAD synthase family. As to quaternary structure, homodimer. A divalent metal cation is required as a cofactor.

The enzyme catalyses FMN + ATP + H(+) = FAD + diphosphate. It functions in the pathway cofactor biosynthesis; FAD biosynthesis; FAD from FMN: step 1/1. In terms of biological role, catalyzes the transfer of the AMP portion of ATP to flavin mononucleotide (FMN) to produce flavin adenine dinucleotide (FAD) coenzyme. This Halalkalicoccus jeotgali (strain DSM 18796 / CECT 7217 / JCM 14584 / KCTC 4019 / B3) protein is FAD synthase.